We begin with the raw amino-acid sequence, 427 residues long: Glutamate-1-semialdehyde 2,1-aminomutase (427 aa).

Lys265 carries the N6-(pyridoxal phosphate)lysine modification.

The protein belongs to the class-III pyridoxal-phosphate-dependent aminotransferase family. HemL subfamily. As to quaternary structure, homodimer. Requires pyridoxal 5'-phosphate as cofactor.

The protein localises to the cytoplasm. The catalysed reaction is (S)-4-amino-5-oxopentanoate = 5-aminolevulinate. The protein operates within porphyrin-containing compound metabolism; protoporphyrin-IX biosynthesis; 5-aminolevulinate from L-glutamyl-tRNA(Glu): step 2/2. This is Glutamate-1-semialdehyde 2,1-aminomutase from Burkholderia thailandensis (strain ATCC 700388 / DSM 13276 / CCUG 48851 / CIP 106301 / E264).